We begin with the raw amino-acid sequence, 300 residues long: Ribosomal RNA small subunit methyltransferase H (300 aa).

Residues 46-48, Asp65, Phe92, Asp107, and Gln114 contribute to the S-adenosyl-L-methionine site; that span reads GGH.

It belongs to the methyltransferase superfamily. RsmH family.

The protein resides in the cytoplasm. It catalyses the reaction cytidine(1402) in 16S rRNA + S-adenosyl-L-methionine = N(4)-methylcytidine(1402) in 16S rRNA + S-adenosyl-L-homocysteine + H(+). Functionally, specifically methylates the N4 position of cytidine in position 1402 (C1402) of 16S rRNA. The chain is Ribosomal RNA small subunit methyltransferase H from Prochlorococcus marinus (strain MIT 9215).